A 246-amino-acid polypeptide reads, in one-letter code: 3'(2'),5'-bisphosphate nucleotidase CysQ (246 aa).

Residues E64, D83, L85, D86, and D205 each contribute to the Mg(2+) site. E64 lines the substrate pocket. Substrate is bound by residues 85 to 88 (LDGT) and D205.

It belongs to the inositol monophosphatase superfamily. CysQ family. The cofactor is Mg(2+).

Its subcellular location is the cell inner membrane. The enzyme catalyses adenosine 3',5'-bisphosphate + H2O = AMP + phosphate. Its function is as follows. Converts adenosine-3',5'-bisphosphate (PAP) to AMP. This Escherichia coli O157:H7 protein is 3'(2'),5'-bisphosphate nucleotidase CysQ.